We begin with the raw amino-acid sequence, 116 residues long: Large ribosomal subunit protein bL20 (116 aa).

It belongs to the bacterial ribosomal protein bL20 family.

Binds directly to 23S ribosomal RNA and is necessary for the in vitro assembly process of the 50S ribosomal subunit. It is not involved in the protein synthesizing functions of that subunit. This Helicobacter pylori (strain HPAG1) protein is Large ribosomal subunit protein bL20.